Consider the following 133-residue polypeptide: Sec-independent protein translocase protein TatB (133 aa).

A helical membrane pass occupies residues 1–21 (MFDIGFWELVLIAIVALVVLG). Residues 67–133 (EQMGMQNLSP…ASQPAEKKAE (67 aa)) are disordered. Over residues 70-84 (GMQNLSPELQKSVES) the composition is skewed to polar residues. Residues 97-116 (AATPSSEASSTSSNPSSATE) are compositionally biased toward low complexity.

This sequence belongs to the TatB family. In terms of assembly, the Tat system comprises two distinct complexes: a TatABC complex, containing multiple copies of TatA, TatB and TatC subunits, and a separate TatA complex, containing only TatA subunits. Substrates initially bind to the TatABC complex, which probably triggers association of the separate TatA complex to form the active translocon.

Its subcellular location is the cell inner membrane. Its function is as follows. Part of the twin-arginine translocation (Tat) system that transports large folded proteins containing a characteristic twin-arginine motif in their signal peptide across membranes. Together with TatC, TatB is part of a receptor directly interacting with Tat signal peptides. TatB may form an oligomeric binding site that transiently accommodates folded Tat precursor proteins before their translocation. The protein is Sec-independent protein translocase protein TatB of Vibrio cholerae serotype O1 (strain ATCC 39315 / El Tor Inaba N16961).